The chain runs to 215 residues: Adenylate kinase (215 aa).

10–15 (GAGKGT) lines the ATP pocket. An NMP region spans residues 30 to 59 (STGDMFRAAIKDQTPLGQEAKSYMDKGELV). AMP contacts are provided by residues T31, R36, 57-59 (ELV), 85-88 (GFPR), and Q92. The interval 126–163 (GRRICPTCGATYHVIYNPPKVEGVCDIDGSALVQREDD) is LID. R127 provides a ligand contact to ATP. 2 residues coordinate Zn(2+): C130 and C133. 136 to 137 (TY) serves as a coordination point for ATP. Residues C150 and D153 each coordinate Zn(2+). 2 residues coordinate AMP: R160 and R171. R199 contributes to the ATP binding site.

Belongs to the adenylate kinase family. As to quaternary structure, monomer.

It is found in the cytoplasm. The enzyme catalyses AMP + ATP = 2 ADP. The protein operates within purine metabolism; AMP biosynthesis via salvage pathway; AMP from ADP: step 1/1. Functionally, catalyzes the reversible transfer of the terminal phosphate group between ATP and AMP. Plays an important role in cellular energy homeostasis and in adenine nucleotide metabolism. The sequence is that of Adenylate kinase from Exiguobacterium sibiricum (strain DSM 17290 / CCUG 55495 / CIP 109462 / JCM 13490 / 255-15).